A 1253-amino-acid chain; its full sequence is Cytoplasmic FMR1-interacting protein 1 (1253 aa).

Ser583 bears the Phosphoserine mark. Thr1234 is subject to Phosphothreonine.

This sequence belongs to the CYFIP family. Component of the WAVE1 complex composed of ABI2, CYFIP1 or CYFIP2, BRK1, NCKAP1 and WASF1/WAVE1. Within the complex, a heterodimer containing NCKAP1 and CYFIP1 interacts with a heterotrimer formed by WAVE1, ABI2 and BRK1. Component of the CYFIP1-EIF4E-FMR1 complex which is composed of CYFIP, EIF4E and FMR1. Interacts with FMR1 but does not bind to related proteins FXR1 or FXR2. Interaction with EIF4E stimulates FMR1 binding. Component of the WAVE2 complex composed of ABI1, CYFIP1/SRA1, NCKAP1/NAP1 (NCKAP1l/HEM1 in hematopoietic cells) and WASF2/WAVE2. Interacts with the active GTP-bound form of RAC1. Interacts through its C-terminus with the C-terminus of DPYSL2/CRMP2 which is necessary for DPYSL2-induced axon outgrowth. Interacts with NYAP1, NYAP2 and MYO16. Interacts with TMEM108 (via N-terminus); the interaction associates TMEM108 with the WAVE1 complex.

The protein localises to the cytoplasm. Its subcellular location is the perinuclear region. The protein resides in the cell projection. It is found in the lamellipodium. It localises to the ruffle. The protein localises to the synapse. Its subcellular location is the synaptosome. Its function is as follows. Component of the CYFIP1-EIF4E-FMR1 complex which binds to the mRNA cap and mediates translational repression. In the CYFIP1-EIF4E-FMR1 complex this subunit is an adapter between EIF4E and FMR1. Promotes the translation repression activity of FMR1 in brain probably by mediating its association with EIF4E and mRNA. Regulates formation of membrane ruffles and lamellipodia. Plays a role in axon outgrowth. Binds to F-actin but not to RNA. Part of the WAVE complex that regulates actin filament reorganization via its interaction with the Arp2/3 complex. Actin remodeling activity is regulated by RAC1. Regulator of epithelial morphogenesis. As component of the WAVE1 complex, required for BDNF-NTRK2 endocytic trafficking and signaling from early endosomes. May act as an invasion suppressor in cancers. The sequence is that of Cytoplasmic FMR1-interacting protein 1 from Homo sapiens (Human).